A 350-amino-acid chain; its full sequence is Aminomethyltransferase (350 aa).

It belongs to the GcvT family. The glycine cleavage system is composed of four proteins: P, T, L and H.

It carries out the reaction N(6)-[(R)-S(8)-aminomethyldihydrolipoyl]-L-lysyl-[protein] + (6S)-5,6,7,8-tetrahydrofolate = N(6)-[(R)-dihydrolipoyl]-L-lysyl-[protein] + (6R)-5,10-methylene-5,6,7,8-tetrahydrofolate + NH4(+). Its function is as follows. The glycine cleavage system catalyzes the degradation of glycine. The sequence is that of Aminomethyltransferase from Aquifex aeolicus (strain VF5).